The following is a 132-amino-acid chain: Small ribosomal subunit protein bS6 (132 aa).

The interval 96–132 (HAEGPSIQMQKRDERERGDRGDRSDRGDRGDRGGFRR) is disordered. Over residues 105 to 132 (QKRDERERGDRGDRSDRGDRGDRGGFRR) the composition is skewed to basic and acidic residues.

Belongs to the bacterial ribosomal protein bS6 family.

In terms of biological role, binds together with bS18 to 16S ribosomal RNA. The sequence is that of Small ribosomal subunit protein bS6 from Cereibacter sphaeroides (strain ATCC 17023 / DSM 158 / JCM 6121 / CCUG 31486 / LMG 2827 / NBRC 12203 / NCIMB 8253 / ATH 2.4.1.) (Rhodobacter sphaeroides).